A 372-amino-acid chain; its full sequence is D-alanine--D-alanine ligase (372 aa).

Residues 145–349 enclose the ATP-grasp domain; it reads KTVLRAGGIP…CPNLLDQLIE (205 aa). 176–231 contacts ATP; the sequence is DRWGTSELFVKAVSLGSSVATLPVKTETEFTKAVKEVFRYDDRLMVEPRIRGREIE. Residues Asp303, Glu316, and Asn318 each contribute to the Mg(2+) site.

Belongs to the D-alanine--D-alanine ligase family. Requires Mg(2+) as cofactor. It depends on Mn(2+) as a cofactor.

The protein localises to the cytoplasm. It catalyses the reaction 2 D-alanine + ATP = D-alanyl-D-alanine + ADP + phosphate + H(+). The protein operates within cell wall biogenesis; peptidoglycan biosynthesis. Functionally, cell wall formation. This chain is D-alanine--D-alanine ligase, found in Coxiella burnetii (strain RSA 331 / Henzerling II).